The sequence spans 258 residues: Tryptophan synthase alpha chain (258 aa).

Active-site proton acceptor residues include glutamate 47 and aspartate 58.

Belongs to the TrpA family. As to quaternary structure, tetramer of two alpha and two beta chains.

The enzyme catalyses (1S,2R)-1-C-(indol-3-yl)glycerol 3-phosphate + L-serine = D-glyceraldehyde 3-phosphate + L-tryptophan + H2O. The protein operates within amino-acid biosynthesis; L-tryptophan biosynthesis; L-tryptophan from chorismate: step 5/5. Functionally, the alpha subunit is responsible for the aldol cleavage of indoleglycerol phosphate to indole and glyceraldehyde 3-phosphate. The chain is Tryptophan synthase alpha chain from Bacillus cereus (strain B4264).